A 155-amino-acid polypeptide reads, in one-letter code: 6,7-dimethyl-8-ribityllumazine synthase (155 aa).

5-amino-6-(D-ribitylamino)uracil is bound by residues Phe24, 58–60 (AFE), and 82–84 (VII). 87–88 (ST) contributes to the (2S)-2-hydroxy-3-oxobutyl phosphate binding site. His90 (proton donor) is an active-site residue. A 5-amino-6-(D-ribitylamino)uracil-binding site is contributed by Phe115. Arg129 is a binding site for (2S)-2-hydroxy-3-oxobutyl phosphate.

Belongs to the DMRL synthase family.

It catalyses the reaction (2S)-2-hydroxy-3-oxobutyl phosphate + 5-amino-6-(D-ribitylamino)uracil = 6,7-dimethyl-8-(1-D-ribityl)lumazine + phosphate + 2 H2O + H(+). It functions in the pathway cofactor biosynthesis; riboflavin biosynthesis; riboflavin from 2-hydroxy-3-oxobutyl phosphate and 5-amino-6-(D-ribitylamino)uracil: step 1/2. In terms of biological role, catalyzes the formation of 6,7-dimethyl-8-ribityllumazine by condensation of 5-amino-6-(D-ribitylamino)uracil with 3,4-dihydroxy-2-butanone 4-phosphate. This is the penultimate step in the biosynthesis of riboflavin. In Chlorobium chlorochromatii (strain CaD3), this protein is 6,7-dimethyl-8-ribityllumazine synthase.